The chain runs to 278 residues: Glycerophosphodiester phosphodiesterase GpdQ (278 aa).

D8, H10, D50, N80, H156, H195, and H197 together coordinate Fe cation.

The protein belongs to the cyclic nucleotide phosphodiesterase class-III family. Fe(2+) is required as a cofactor.

The enzyme catalyses a sn-glycero-3-phosphodiester + H2O = an alcohol + sn-glycerol 3-phosphate + H(+). The catalysed reaction is sn-glycero-3-phosphoethanolamine + H2O = ethanolamine + sn-glycerol 3-phosphate + H(+). Functionally, catalyzes the hydrolysis of the 3'-5' phosphodiester bond of glycerophosphodiesters such as glycerophosphorylethanolamine (GPE), a typical phospholipid metabolite. The sequence is that of Glycerophosphodiester phosphodiesterase GpdQ from Enterobacter lignolyticus (strain SCF1).